Reading from the N-terminus, the 291-residue chain is GTPase Era (291 aa).

Positions 2-167 constitute an Era-type G domain; the sequence is KSGFVSIIGR…LDEIVKYLDK (166 aa). Residues 10–17 form a G1 region; the sequence is GRTNAGKS. 10-17 is a GTP binding site; that stretch reads GRTNAGKS. The G2 stretch occupies residues 36-40; that stretch reads NATRR. Residues 57–60 form a G3 region; it reads DTPG. Residues 57-61 and 116-119 each bind GTP; these read DTPGL and NKVD. Residues 116 to 119 are G4; it reads NKVD. The interval 146–148 is G5; it reads YSS. The 89-residue stretch at 186–274 folds into the KH type-2 domain; sequence YRDFILESIY…LLKLFVTVKK (89 aa).

This sequence belongs to the TRAFAC class TrmE-Era-EngA-EngB-Septin-like GTPase superfamily. Era GTPase family. As to quaternary structure, monomer.

The protein resides in the cytoplasm. The protein localises to the cell inner membrane. An essential GTPase that binds both GDP and GTP, with rapid nucleotide exchange. Plays a role in 16S rRNA processing and 30S ribosomal subunit biogenesis and possibly also in cell cycle regulation and energy metabolism. The chain is GTPase Era from Campylobacter jejuni subsp. jejuni serotype O:6 (strain 81116 / NCTC 11828).